The following is a 502-amino-acid chain: Keratin-associated protein 16-1 (502 aa).

15 consecutive repeat copies span residues 4-8 (CCCSR), 58-62 (CCQPS), 73-77 (CCEAT), 93-97 (CCEAT), 108-112 (CCQPV), 113-117 (CCEAT), 133-137 (CCEAT), 152-156 (CCETS), 177-181 (CCQPV), 187-191 (CCSAV), 212-216 (CCQPV), 222-226 (CCPSV), 272-276 (CCVQG), 292-296 (CCVSS), and 347-351 (CCRPG). The segment at 73 to 307 (CCEATICEPS…CQPVCPEPSP (235 aa)) is 15 X 5 AA repeats of C-C-X(3). The tract at residues 435–502 (RQPCTDSDND…QPAASKPADR (68 aa)) is disordered. Over residues 489-502 (AAAPQPAASKPADR) the composition is skewed to low complexity.

It belongs to the KRTAP type 16 family. Interacts with hair keratins.

In the hair cortex, hair keratin intermediate filaments are embedded in an interfilamentous matrix, consisting of hair keratin-associated proteins (KRTAP), which are essential for the formation of a rigid and resistant hair shaft through their extensive disulfide bond cross-linking with abundant cysteine residues of hair keratins. The matrix proteins include the high-sulfur and high-glycine-tyrosine keratins. The sequence is that of Keratin-associated protein 16-1 (Krtap16-1) from Mus musculus (Mouse).